Reading from the N-terminus, the 751-residue chain is Glutathione biosynthesis bifunctional protein GshAB (751 aa).

Residues Met1–Leu336 form a glutamate--cysteine ligase region.

The protein in the N-terminal section; belongs to the glutamate--cysteine ligase type 1 family. Type 2 subfamily. Monomer.

It carries out the reaction L-cysteine + L-glutamate + ATP = gamma-L-glutamyl-L-cysteine + ADP + phosphate + H(+). The enzyme catalyses gamma-L-glutamyl-L-cysteine + glycine + ATP = glutathione + ADP + phosphate + H(+). The protein operates within sulfur metabolism; glutathione biosynthesis; glutathione from L-cysteine and L-glutamate: step 1/2. It participates in sulfur metabolism; glutathione biosynthesis; glutathione from L-cysteine and L-glutamate: step 2/2. In terms of biological role, synthesizes glutathione from L-glutamate and L-cysteine via gamma-L-glutamyl-L-cysteine. This chain is Glutathione biosynthesis bifunctional protein GshAB (gshAB), found in Lactiplantibacillus plantarum (strain ATCC BAA-793 / NCIMB 8826 / WCFS1) (Lactobacillus plantarum).